A 442-amino-acid polypeptide reads, in one-letter code: Proline--tRNA ligase (442 aa).

It belongs to the class-II aminoacyl-tRNA synthetase family. ProS type 2 subfamily. Homodimer.

It localises to the cytoplasm. It carries out the reaction tRNA(Pro) + L-proline + ATP = L-prolyl-tRNA(Pro) + AMP + diphosphate. In terms of biological role, catalyzes the attachment of proline to tRNA(Pro) in a two-step reaction: proline is first activated by ATP to form Pro-AMP and then transferred to the acceptor end of tRNA(Pro). This chain is Proline--tRNA ligase, found in Brucella abortus (strain S19).